Reading from the N-terminus, the 95-residue chain is Citrate lyase acyl carrier protein (95 aa).

S14 carries the O-(phosphoribosyl dephospho-coenzyme A)serine modification.

Belongs to the CitD family. As to quaternary structure, oligomer with a subunit composition of (alpha,beta,gamma)6.

The protein localises to the cytoplasm. Its function is as follows. Covalent carrier of the coenzyme of citrate lyase. This chain is Citrate lyase acyl carrier protein, found in Haemophilus influenzae (strain ATCC 51907 / DSM 11121 / KW20 / Rd).